The following is an 898-amino-acid chain: Vacuolar membrane protease (898 aa).

The Cytoplasmic portion of the chain corresponds to 1–14; the sequence is MGIVDYLVAAVSFR. A helical transmembrane segment spans residues 15–35; it reads TLPTTFVAVLVYLAIFISVLI. Topologically, residues 36 to 342 are vacuolar; sequence TDELPATPKD…LFGQALIVFP (307 aa). Residues Asn-50, Asn-103, and Asn-110 are each glycosylated (N-linked (GlcNAc...) asparagine). 2 residues coordinate Zn(2+): His-139 and Asp-151. The Proton acceptor role is filled by Glu-183. Glu-184 is a binding site for Zn(2+). Asn-200 is a glycosylation site (N-linked (GlcNAc...) asparagine). Positions 209 and 284 each coordinate Zn(2+). The chain crosses the membrane as a helical span at residues 343–365; it reads LSAMITFNIVFLVVGPIMLALLV. At 366–411 the chain is on the cytoplasmic side; the sequence is TFDIVARHRRQEMIGGGYEEQGFFARAWTSFKSFRWVGGFWKHAKF. Residues 412-432 form a helical membrane-spanning segment; sequence WVALAVTVGLQVLLCVGYLYI. A topological domain (vacuolar) is located at residue Asn-433. Residues 434–454 form a helical membrane-spanning segment; sequence PLIAYSSSHIVLLSFLSLAYL. Topologically, residues 455 to 479 are cytoplasmic; it reads STYLVHNIPSPTDTYGSHLPEQQKQ. Residues 480 to 500 form a helical membrane-spanning segment; it reads AALFQLYFFTWILLLAATVVG. At 501 to 509 the chain is on the vacuolar side; that stretch reads AKLSVGSFY. The helical transmembrane segment at 510 to 530 threads the bilayer; sequence ILSLWNAVLFAACAIGSIAGL. The Cytoplasmic segment spans residues 531-593; sequence LSSHTVEGDA…PGGKEGEEVS (63 aa). The chain crosses the membrane as a helical span at residues 594–614; sequence GAIGWWFVQFVLSVPAVVILV. Residues 615–635 are Vacuolar-facing; it reads SQLALLMLAATEQTLADGSPA. Residues 636 to 656 form a helical membrane-spanning segment; it reads VTVYGGASLMSVLAILPLAPF. The Cytoplasmic portion of the chain corresponds to 657–664; the sequence is ACKLHRRV. The chain crosses the membrane as a helical span at residues 665–685; it reads AYVALVVLIASTAYAWLVFPF. Residues 686–898 are Vacuolar-facing; that stretch reads SERAPLKVFF…LVEGYKAFAV (213 aa). Residues Asn-704, Asn-733, and Asn-764 are each glycosylated (N-linked (GlcNAc...) asparagine).

Belongs to the peptidase M28 family. Requires Zn(2+) as cofactor.

It localises to the vacuole membrane. In terms of biological role, may be involved in vacuolar sorting and osmoregulation. In Schizophyllum commune (strain H4-8 / FGSC 9210) (Split gill fungus), this protein is Vacuolar membrane protease.